The sequence spans 905 residues: Microtubule-associated protein 10 (905 aa).

7 disordered regions span residues 30 to 51 (AAAV…SSPR), 199 to 235 (TRTG…KPLG), 329 to 362 (APEE…AHEH), 434 to 458 (SPES…GGCE), 547 to 586 (SSAE…FDEP), 721 to 772 (RSFK…GSPV), and 786 to 855 (KSLE…SSYL). Acidic residues predominate over residues 34–43 (EQEEEEEEKE). A compositionally biased stretch (low complexity) spans 208–227 (SPQTQQERQQLQQPASQPSP). Residues 443 to 453 (CRSEAKKDKRS) are compositionally biased toward basic and acidic residues. Polar residues predominate over residues 567–579 (ASFTENSDTSRQI). Over residues 721–736 (RSFKAHDSSSRTENPK) the composition is skewed to basic and acidic residues. The span at 737–748 (HSQYTSKSSDTG) shows a compositional bias: polar residues. Positions 790–801 (EASSISASDLSS) are enriched in low complexity. The span at 830 to 855 (SVKTRSSWKSLEKSQSPQTSQVSSYL) shows a compositional bias: polar residues.

In terms of assembly, interacts (via middle region) with microtubules. Expressed in different cell lines (at protein level).

The protein localises to the cytoplasm. It is found in the cytoskeleton. It localises to the spindle pole. Its subcellular location is the microtubule organizing center. The protein resides in the centrosome. The protein localises to the midbody. Microtubule-associated protein (MAP) that plays a role in the regulation of cell division; promotes microtubule stability and participates in the organization of the spindle midzone and normal progress of cytokinesis. The chain is Microtubule-associated protein 10 (MAP10) from Homo sapiens (Human).